The primary structure comprises 199 residues: Probable thymidylate kinase (199 aa).

Position 9–16 (9–16 (GIDGCGKT)) interacts with ATP.

It belongs to the thymidylate kinase family.

The catalysed reaction is dTMP + ATP = dTDP + ADP. In Methanococcus maripaludis (strain DSM 14266 / JCM 13030 / NBRC 101832 / S2 / LL), this protein is Probable thymidylate kinase.